The following is a 334-amino-acid chain: Mevalonate kinase (334 aa).

ATP is bound at residue 110–120; sequence PVGAGLGSSAA. The active-site Proton acceptor is Asp161.

Belongs to the GHMP kinase family. Mevalonate kinase subfamily. Homodimer. The cofactor is Mg(2+).

The protein localises to the cytoplasm. It catalyses the reaction (R)-mevalonate + ATP = (R)-5-phosphomevalonate + ADP + H(+). The protein operates within isoprenoid biosynthesis; isopentenyl diphosphate biosynthesis via mevalonate pathway; isopentenyl diphosphate from (R)-mevalonate: step 1/3. In terms of biological role, catalyzes the phosphorylation of (R)-mevalonate (MVA) to (R)-mevalonate 5-phosphate (MVAP). Functions in the mevalonate (MVA) pathway leading to isopentenyl diphosphate (IPP), a key precursor for the biosynthesis of isoprenoid compounds such as archaeal membrane lipids. The protein is Mevalonate kinase of Thermococcus onnurineus (strain NA1).